We begin with the raw amino-acid sequence, 410 residues long: Adenosine receptor A2a (410 aa).

Over 1 to 4 (MGSS) the chain is Extracellular. A helical transmembrane segment spans residues 5–29 (VYITVELAIAVLAILGNVLVCWAVW). Topologically, residues 30–39 (INSNLQNVTN) are cytoplasmic. A helical membrane pass occupies residues 40–63 (FFVVSLAAADIAVGVLAIPFAITI). At 64-74 (STGFCAACHGC) the chain is on the extracellular side. Intrachain disulfides connect Cys68–Cys154, Cys71–Cys143, and Cys74–Cys161. Residues 75 to 97 (LFFACFVLVLTQSSIFSLLAIAI) traverse the membrane as a helical segment. At 98–117 (DRYIAIRIPLRYNGLVTGVR) the chain is on the cytoplasmic side. Residues 118 to 140 (AKGIIAICWVLSFAIGLTPMLGW) traverse the membrane as a helical segment. Over 141 to 168 (NNCSQKDGNSTKTCGEGRVTCLFEDVVP) the chain is Extracellular. 2 N-linked (GlcNAc...) asparagine glycosylation sites follow: Asn142 and Asn149. Glu164 is an adenosine binding site. Residues 169 to 193 (MNYMVYYNFFAFVLLPLLLMLAIYL) traverse the membrane as a helical segment. Over 194–229 (RIFLAARRQLKQMESQPLPGERTRSTLQKEVHAAKS) the chain is Cytoplasmic. Residues 230–253 (LAIIVGLFALCWLPLHIINCFTFF) form a helical membrane-spanning segment. Asn248 provides a ligand contact to adenosine. Cys254 and Cys257 are joined by a disulfide. Over 254–261 (CSTCRHAP) the chain is Extracellular. A helical transmembrane segment spans residues 262–285 (PWLMYLAIILSHSNSVVNPFIYAY). Adenosine contacts are provided by Ser272 and His273. Topologically, residues 286–410 (RIREFRQTFR…SSWSSEFAPS (125 aa)) are cytoplasmic. The interval 322–410 (HSTEGEQVSL…SSWSSEFAPS (89 aa)) is interaction with GAS2L2. A disordered region spans residues 344 to 410 (GSATHSGRRP…SSWSSEFAPS (67 aa)). A compositionally biased stretch (basic and acidic residues) spans 371-388 (RDVELPTQERQEGQEHPG). Residues 401-410 (SSWSSEFAPS) show a composition bias toward polar residues.

Belongs to the G-protein coupled receptor 1 family. In terms of assembly, interacts (via cytoplasmic C-terminal domain) with USP4; the interaction is direct. May interact with DRD4. Interacts with NECAB2. Interacts (via cytoplasmic C-terminal domain) with GAS2L2; interaction enhances receptor-mediated adenylyl cyclase activity. Ubiquitinated. Deubiquitinated by USP4; leading to stabilization and expression at the cell surface. As to expression, expressed in striatal neurons (at protein level).

The protein resides in the cell membrane. Its function is as follows. Receptor for adenosine. The activity of this receptor is mediated by G proteins which activate adenylyl cyclase. The chain is Adenosine receptor A2a (Adora2a) from Rattus norvegicus (Rat).